The following is a 138-amino-acid chain: Putative ribonuclease VapC45 (138 aa).

In terms of biological role, toxic component of a type II toxin-antitoxin (TA) system. An RNase. The cognate antitoxin is VapB45. This Mycobacterium tuberculosis (strain ATCC 25618 / H37Rv) protein is Putative ribonuclease VapC45.